Consider the following 228-residue polypeptide: Phosphoglycolate phosphatase (228 aa).

D9 serves as the catalytic Nucleophile. Residues D9 and D11 each coordinate Mg(2+). K151 is a substrate binding site. Positions 174 and 178 each coordinate Mg(2+).

Belongs to the archaeal SPP-like hydrolase family. Mg(2+) is required as a cofactor.

It catalyses the reaction 2-phosphoglycolate + H2O = glycolate + phosphate. Its function is as follows. Catalyzes the dephosphorylation of 2-phosphoglycolate. The sequence is that of Phosphoglycolate phosphatase from Pyrobaculum islandicum (strain DSM 4184 / JCM 9189 / GEO3).